Consider the following 82-residue polypeptide: MNKPVHNNEHRRKRFNKKCPFVSAGWKTIDYKDTETLKKFITERGKILPRRITGVSSRFQGILTLAIKRARHIGFLPFVGED.

It belongs to the bacterial ribosomal protein bS18 family. Part of the 30S ribosomal subunit. Forms a tight heterodimer with protein bS6.

Its function is as follows. Binds as a heterodimer with protein bS6 to the central domain of the 16S rRNA, where it helps stabilize the platform of the 30S subunit. The chain is Small ribosomal subunit protein bS18 from Chlamydia felis (strain Fe/C-56) (Chlamydophila felis).